Here is a 539-residue protein sequence, read N- to C-terminus: Beta-agarase A (539 aa).

The signal sequence occupies residues 1–19 (MKKNYLLLYFIFLLCGSIA). The region spanning 21 to 289 (QDWNGIPVPA…WIRVYKPVAV (269 aa)) is the GH16 domain. Substrate contacts are provided by residues W73, 82 to 92 (NAPQAWTNGSQ), 96 to 98 (QAQ), and E144. E147 serves as the catalytic Nucleophile. E152 acts as the Proton donor in catalysis. Substrate-binding residues include R176 and D271. The interval 332-353 (WANTNDIGSRDRGASNGRNNIN) is disordered.

This sequence belongs to the glycosyl hydrolase 16 family. As to quaternary structure, monomer. In terms of processing, proteolytically cleaved into mature beta-agarase A catalytic chain (AgaAc).

The protein resides in the secreted. It catalyses the reaction Hydrolysis of (1-&gt;4)-beta-D-galactosidic linkages in agarose, giving the tetramer as the predominant product.. Functionally, cleaves the beta-1,4-linkages between beta-D-galactose and alpha-L-3,6-anhydro-galactose residues in agarose. Cleaves agarose in a random manner with retention of the anomeric-bond configuration, producing beta-anomers that give rise progressively to alpha-anomers when mutarotation takes place. The polypeptide is Beta-agarase A (agaA) (Zobellia galactanivorans (strain DSM 12802 / CCUG 47099 / CIP 106680 / NCIMB 13871 / Dsij)).